Reading from the N-terminus, the 506-residue chain is Maturase K (506 aa).

This sequence belongs to the intron maturase 2 family. MatK subfamily.

It localises to the plastid. Its subcellular location is the chloroplast. In terms of biological role, usually encoded in the trnK tRNA gene intron. Probably assists in splicing its own and other chloroplast group II introns. The protein is Maturase K of Melilotus albus (White sweet clover).